Here is a 396-residue protein sequence, read N- to C-terminus: Aspartate aminotransferase (396 aa).

Residues Gly34, Trp130, and Asn183 each coordinate L-aspartate. Lys246 is modified (N6-(pyridoxal phosphate)lysine). Arg374 serves as a coordination point for L-aspartate.

This sequence belongs to the class-I pyridoxal-phosphate-dependent aminotransferase family. Homodimer. It depends on pyridoxal 5'-phosphate as a cofactor.

It is found in the cytoplasm. The enzyme catalyses L-aspartate + 2-oxoglutarate = oxaloacetate + L-glutamate. This chain is Aspartate aminotransferase (aspC), found in Haemophilus influenzae (strain ATCC 51907 / DSM 11121 / KW20 / Rd).